We begin with the raw amino-acid sequence, 547 residues long: Apicoplast pyruvate carrier 1 (547 aa).

Residues 1–33 (MEPRAPPRLSVSSPRRESGATVPSHSPSTLLSC) form a disordered region. The Cytoplasmic segment spans residues 1 to 45 (MEPRAPPRLSVSSPRRESGATVPSHSPSTLLSCASSETATEKRRR). A compositionally biased stretch (polar residues) spans 21 to 33 (TVPSHSPSTLLSC). 12 helical membrane-spanning segments follow: residues 46-66 (WTGV…GTVY), 126-146 (AWVL…GGIA), 167-187 (VGMA…FGVI), 189-209 (GVGL…WFPE), 212-232 (GIVS…FSPL), 278-298 (LLAV…RVPA), 345-365 (ALVS…GLAI), 385-405 (ILTE…NAVG), 417-437 (GFQT…FFLP), 445-465 (LCYA…FSVF), 467-487 (SAVA…FIFG), and 515-535 (LMGL…ALSP).

It belongs to the major facilitator superfamily. Interacts with apicoplast pyruvate carrier 2.

It localises to the plastid. The protein localises to the apicoplast. The protein resides in the membrane. Along with apicoplast pyruvate carrier 2, forms apicoplast pyruvate carrier (APC) complex, which transports pyruvate into the apicoplast and may also transport amino acids like methionine, serine, glycine and tryptophan with low efficiency. Required for maintaining pyruvate-dependent metabolic activities in the apicoplast, such as synthesis of fatty acids, isopentenyl pyrophosphate (IPP), dimethylallyl pyrophosphate (DMAPP) and methylerythritol 4-phosphate (MEP). Required for maintaining the integrity of the apicoplast. Required for normal parasite growth. The chain is Apicoplast pyruvate carrier 1 from Toxoplasma gondii.